Consider the following 157-residue polypeptide: Protein Smg homolog (157 aa).

Belongs to the Smg family.

The sequence is that of Protein Smg homolog from Shewanella loihica (strain ATCC BAA-1088 / PV-4).